Reading from the N-terminus, the 505-residue chain is Alpha-internexin (505 aa).

The tract at residues 1 to 87 (MSFGSEHYLC…SQAAARTNEY (87 aa)) is head. Ser72 is modified (phosphoserine). The coil 1A stretch occupies residues 88-129 (KIIRTNEKEQLQGLNDRFAVFIEKVHQLETQNRALEAELAAL). The IF rod domain maps to 94–407 (EKEQLQGLND…KLLEGEETRF (314 aa)). The tract at residues 130–142 (RQRHAEPSRVGEL) is linker 1. The interval 143–238 (FQRELRELRA…QVHDEEVAEL (96 aa)) is coil 1B. Ser219 carries the phosphoserine modification. Residues 239 to 262 (LATLQASSQAAAEVDVAVAKPDLT) form a linker 2 region. Residues 263-408 (SALREIRAQY…LLEGEETRFS (146 aa)) are coil 2. Lys290 is subject to N6-acetyllysine. Ser335, Ser474, and Ser502 each carry phosphoserine. A tail region spans residues 409–505 (TSGLSISGLN…EITTSSSQKM (97 aa)). The segment at 438–505 (KVSSAGLSLK…EITTSSSQKM (68 aa)) is disordered. Low complexity predominate over residues 495 to 505 (EEITTSSSQKM).

This sequence belongs to the intermediate filament family. Forms homodimers (in vitro). Forms heterodimers with NEFL, NEFM or NEFH (in vitro). Post-translationally, O-glycosylated. Expressed in the dorsal root ganglion neurons (at protein level).

Its function is as follows. Class-IV neuronal intermediate filament that is able to self-assemble. It is involved in the morphogenesis of neurons. It may form an independent structural network without the involvement of other neurofilaments or it may cooperate with NEFL to form the filamentous backbone to which NEFM and NEFH attach to form the cross-bridges. May also cooperate with the neuronal intermediate filament protein PRPH to form filamentous networks. In Rattus norvegicus (Rat), this protein is Alpha-internexin (Ina).